We begin with the raw amino-acid sequence, 372 residues long: Queuine tRNA-ribosyltransferase (372 aa).

Asp-89 (proton acceptor) is an active-site residue. Substrate contacts are provided by residues 89 to 93 (DSGGF), Asp-161, and Gly-232. The RNA binding stretch occupies residues 262–268 (GIGDLPS). The Nucleophile role is filled by Asp-281. The RNA binding; important for wobble base 34 recognition stretch occupies residues 286–290 (TKAAR). Residues Cys-319, Cys-321, Cys-324, and His-351 each coordinate Zn(2+).

The protein belongs to the queuine tRNA-ribosyltransferase family. As to quaternary structure, homodimer. Within each dimer, one monomer is responsible for RNA recognition and catalysis, while the other monomer binds to the replacement base PreQ1. It depends on Zn(2+) as a cofactor.

It carries out the reaction 7-aminomethyl-7-carbaguanine + guanosine(34) in tRNA = 7-aminomethyl-7-carbaguanosine(34) in tRNA + guanine. Its pathway is tRNA modification; tRNA-queuosine biosynthesis. Catalyzes the base-exchange of a guanine (G) residue with the queuine precursor 7-aminomethyl-7-deazaguanine (PreQ1) at position 34 (anticodon wobble position) in tRNAs with GU(N) anticodons (tRNA-Asp, -Asn, -His and -Tyr). Catalysis occurs through a double-displacement mechanism. The nucleophile active site attacks the C1' of nucleotide 34 to detach the guanine base from the RNA, forming a covalent enzyme-RNA intermediate. The proton acceptor active site deprotonates the incoming PreQ1, allowing a nucleophilic attack on the C1' of the ribose to form the product. After dissociation, two additional enzymatic reactions on the tRNA convert PreQ1 to queuine (Q), resulting in the hypermodified nucleoside queuosine (7-(((4,5-cis-dihydroxy-2-cyclopenten-1-yl)amino)methyl)-7-deazaguanosine). The polypeptide is Queuine tRNA-ribosyltransferase (Chlamydia pneumoniae (Chlamydophila pneumoniae)).